Here is a 476-residue protein sequence, read N- to C-terminus: ENTH domain-containing protein C794.11c (476 aa).

In terms of domain architecture, ENTH spans 30-154 (YTSMEARVRE…VELLNDSERI (125 aa)). Disordered regions lie at residues 157-198 (ERKR…GSYR), 213-308 (NGYH…GFGD), 410-429 (QAGLGLTSQQPTAAKSSGSN), and 444-472 (VHQENSTRERVVSSSSEPVSKTQNFLDND). S173 bears the Phosphoserine mark. 2 stretches are compositionally biased toward low complexity: residues 178 to 198 (RISTSSKSRFPSFGSSRGSYR) and 213 to 222 (NGYHDSSSMS). Phosphoserine is present on S228. The span at 229–240 (DNDVEEYNEDGD) shows a compositional bias: acidic residues. Position 235 is a phosphotyrosine (Y235). Phosphoserine is present on residues S243 and S244. Positions 262–271 (QSDKAPEQPK) are enriched in basic and acidic residues. Positions 444–454 (VHQENSTRERV) are enriched in basic and acidic residues. S459 carries the post-translational modification Phosphoserine.

This is ENTH domain-containing protein C794.11c from Schizosaccharomyces pombe (strain 972 / ATCC 24843) (Fission yeast).